Consider the following 346-residue polypeptide: Glycerol-1-phosphate dehydrogenase [NAD(P)+] (346 aa).

Residues 93-97 (GSIID) and 115-118 (TTAS) contribute to the NAD(+) site. A substrate-binding site is contributed by aspartate 120. Residue serine 124 participates in NAD(+) binding. Residue aspartate 167 coordinates substrate. Zn(2+)-binding residues include aspartate 167 and histidine 247. Histidine 251 is a substrate binding site. Histidine 263 lines the Zn(2+) pocket.

It belongs to the glycerol-1-phosphate dehydrogenase family. Zn(2+) serves as cofactor.

It localises to the cytoplasm. It catalyses the reaction sn-glycerol 1-phosphate + NAD(+) = dihydroxyacetone phosphate + NADH + H(+). The enzyme catalyses sn-glycerol 1-phosphate + NADP(+) = dihydroxyacetone phosphate + NADPH + H(+). Its pathway is membrane lipid metabolism; glycerophospholipid metabolism. Functionally, catalyzes the NAD(P)H-dependent reduction of dihydroxyacetonephosphate (DHAP or glycerone phosphate) to glycerol 1-phosphate (G1P). The G1P thus generated is used as the glycerophosphate backbone of phospholipids in the cellular membranes of Archaea. The chain is Glycerol-1-phosphate dehydrogenase [NAD(P)+] from Pyrococcus abyssi (strain GE5 / Orsay).